Consider the following 538-residue polypeptide: Guanine nucleotide-binding protein-like 3 (538 aa).

Positions 1-45 (MKRPKLKKASKRMTCHKRYKIQKKVREHHRKLRKEAKKRGHKKPR) are enriched in basic residues. 2 disordered regions span residues 1 to 57 (MKRP…APFK) and 69 to 126 (QQLE…NPKK). The interval 2-46 (KRPKLKKASKRMTCHKRYKIQKKVREHHRKLRKEAKKRGHKKPRK) is basic. Residues 54 to 95 (APFKEALLREAELRKQQLEELKQQQKLDRQKEQERKRKLEVS) adopt a coiled-coil conformation. A compositionally biased stretch (basic and acidic residues) spans 69–93 (QQLEELKQQQKLDRQKEQERKRKLE). At Lys-79 the chain carries N6-acetyllysine. Lys-91 is covalently cross-linked (Glycyl lysine isopeptide (Lys-Gly) (interchain with G-Cter in SUMO2)). A phosphoserine mark is found at Ser-95 and Ser-101. Over residues 114–126 (RKKAKAGKQNPKK) the composition is skewed to basic residues. The CP-type G domain occupies 129–307 (CQELKKVIEA…IIDSPCLIIS (179 aa)). 176–179 (NKSD) is a binding site for GTP. Glycyl lysine isopeptide (Lys-Gly) (interchain with G-Cter in SUMO2) cross-links involve residues Lys-177, Lys-248, Lys-262, and Lys-270. 256–263 (GFPNVGKS) provides a ligand contact to GTP. Residues 277 to 451 (VGISMGLTRS…HLTNRILFRS (175 aa)) are intermediate. 300–303 (DSPC) contacts GTP. Residues 460–475 (DEKDIVEESPRQTEDK) are compositionally biased toward basic and acidic residues. An acidic region spans residues 460–532 (DEKDIVEESP…RASQEDETYD (73 aa)). Residues 460 to 538 (DEKDIVEESP…ETYDFTTDYI (79 aa)) are disordered. 3 positions are modified to phosphoserine: Ser-493, Ser-505, and Ser-518. Polar residues predominate over residues 506 to 518 (PEQSTAGKPSDGS).

Belongs to the TRAFAC class YlqF/YawG GTPase family. As to quaternary structure, interacts with MDM2; this interaction stabilizes MDM2. Interaction with MDM2 occurs in the nucleoplasm and is triggered by a nucleolar release mechanism, such as mitosis-induced nucleolar disassembly. Indirectly interacts with TP53, via MDM2-binding. Interacts with TSC22D1 isoform 2. Expressed in the adult bone marrow population that is enriched in hematopoietic stem cells.

The protein resides in the nucleus. Its subcellular location is the nucleolus. In terms of biological role, may be required to maintain the proliferative capacity of stem cells. Stabilizes MDM2 by preventing its ubiquitination, and hence proteasomal degradation. The polypeptide is Guanine nucleotide-binding protein-like 3 (Gnl3) (Mus musculus (Mouse)).